The following is an 838-amino-acid chain: Transforming acidic coiled-coil-containing protein 3 (838 aa).

N-acetylserine is present on S2. 3 positions are modified to phosphoserine: S25, S39, and S71. The tract at residues 123–227 (EADTDLLGDA…HGAEEECKAE (105 aa)) is disordered. The segment covering 132-164 (ASPAFGSGSSSESGPGALADLDCSSSSQSPGSS) has biased composition (low complexity). Phosphoserine is present on residues S175 and S177. Residues 204-227 (DPCRTESQHKAETPHGAEEECKAE) are compositionally biased toward basic and acidic residues. S250, S317, and S402 each carry phosphoserine. The tract at residues 311–527 (GRAMTLSPQE…LELKEESFRD (217 aa)) is disordered. Basic and acidic residues predominate over residues 403–412 (YHLDWDKMDD). At S434 the chain carries Phosphoserine. The segment covering 492-503 (NSASTSLPTSCP) has biased composition (polar residues). Residues 522–577 (EESFRDPAEVLGTGAEVDYLEQFGTSSFKESALRKQSLYLKFDPLLRDSPGRPVPV) are necessary but not sufficient for spindle localization. Phosphoserine; by AURKA is present on S558. The tract at residues 569–594 (DSPGRPVPVATETSSMHGANETPSGR) is disordered. Residues 579–591 (TETSSMHGANETP) are compositionally biased toward polar residues. A necessary but not sufficient for spindle localization region spans residues 594–838 (RPREAKLVEF…DDLISKMEKI (245 aa)). Residues 637–837 (LQYSQKDLDA…CDDLISKMEK (201 aa)) adopt a coiled-coil conformation.

It belongs to the TACC family. As to quaternary structure, interacts with microtubules. Interacts with CKAP5 independently of clathrin. Interacts with CKAP5 and clathrin forming the TACC3/ch-TOG/clathrin complex located at spindle inter-microtubules bridges; TACC3 (phosphorylated at Ser-558 by AURKA) and CLTC are proposed to form a composite microtubule interaction surface. Interacts with CCDC100/CEP120. The coiled coil C-terminal region interacts with AH receptor nuclear translocator protein (ARNT) and ARNT2. Interacts with GCN5L2 and PCAF.

Its subcellular location is the cytoplasm. The protein resides in the cytoskeleton. It localises to the microtubule organizing center. It is found in the centrosome. The protein localises to the spindle. Its subcellular location is the spindle pole. Its function is as follows. Plays a role in the microtubule-dependent coupling of the nucleus and the centrosome. Involved in the processes that regulate centrosome-mediated interkinetic nuclear migration (INM) of neural progenitors. Acts as a component of the TACC3/ch-TOG/clathrin complex proposed to contribute to stabilization of kinetochore fibers of the mitotic spindle by acting as inter-microtubule bridge. The TACC3/ch-TOG/clathrin complex is required for the maintenance of kinetochore fiber tension. May be involved in the control of cell growth and differentiation. May contribute to cancer. The chain is Transforming acidic coiled-coil-containing protein 3 (TACC3) from Homo sapiens (Human).